We begin with the raw amino-acid sequence, 91 residues long: Small ribosomal subunit protein uS19 (91 aa).

Belongs to the universal ribosomal protein uS19 family.

Its function is as follows. Protein S19 forms a complex with S13 that binds strongly to the 16S ribosomal RNA. This chain is Small ribosomal subunit protein uS19, found in Synechococcus sp. (strain CC9311).